Reading from the N-terminus, the 470-residue chain is 3-isopropylmalate dehydratase large subunit (470 aa).

Positions 347, 407, and 410 each coordinate [4Fe-4S] cluster.

This sequence belongs to the aconitase/IPM isomerase family. LeuC type 1 subfamily. As to quaternary structure, heterodimer of LeuC and LeuD. [4Fe-4S] cluster is required as a cofactor.

It catalyses the reaction (2R,3S)-3-isopropylmalate = (2S)-2-isopropylmalate. Its pathway is amino-acid biosynthesis; L-leucine biosynthesis; L-leucine from 3-methyl-2-oxobutanoate: step 2/4. Functionally, catalyzes the isomerization between 2-isopropylmalate and 3-isopropylmalate, via the formation of 2-isopropylmaleate. The sequence is that of 3-isopropylmalate dehydratase large subunit from Shewanella amazonensis (strain ATCC BAA-1098 / SB2B).